We begin with the raw amino-acid sequence, 297 residues long: tRNA (guanine-N(7)-)-methyltransferase (297 aa).

S-adenosyl-L-methionine is bound by residues Gly-101, Glu-124–Ile-125, Asn-171–Thr-172, and Cys-191. Residue Asp-194 is part of the active site. Thr-270 to Glu-272 contacts S-adenosyl-L-methionine.

The protein belongs to the class I-like SAM-binding methyltransferase superfamily. TrmB family. As to quaternary structure, forms a complex with trm82.

The protein localises to the nucleus. It carries out the reaction guanosine(46) in tRNA + S-adenosyl-L-methionine = N(7)-methylguanosine(46) in tRNA + S-adenosyl-L-homocysteine. It participates in tRNA modification; N(7)-methylguanine-tRNA biosynthesis. In terms of biological role, catalyzes the formation of N(7)-methylguanine at position 46 (m7G46) in tRNA. This chain is tRNA (guanine-N(7)-)-methyltransferase (trm8), found in Aspergillus niger (strain ATCC MYA-4892 / CBS 513.88 / FGSC A1513).